Here is a 347-residue protein sequence, read N- to C-terminus: Holliday junction branch migration complex subunit RuvB (347 aa).

Residues 1 to 185 are large ATPase domain (RuvB-L); sequence MSDDPTTPEL…FGFTAHLEFY (185 aa). ATP contacts are provided by residues Leu-24, Arg-25, Gly-66, Lys-69, Thr-70, Thr-71, 132-134, Arg-175, Tyr-185, and Arg-222; that span reads EDF. Thr-70 provides a ligand contact to Mg(2+). Positions 186 to 255 are small ATPAse domain (RuvB-S); sequence DEGELAQVLA…AVHAALELYD (70 aa). Residues 258 to 347 are head domain (RuvB-H); it reads ELGLDRLDRA…SQPPSLMDDL (90 aa). Arg-313 and Arg-318 together coordinate DNA.

This sequence belongs to the RuvB family. As to quaternary structure, homohexamer. Forms an RuvA(8)-RuvB(12)-Holliday junction (HJ) complex. HJ DNA is sandwiched between 2 RuvA tetramers; dsDNA enters through RuvA and exits via RuvB. An RuvB hexamer assembles on each DNA strand where it exits the tetramer. Each RuvB hexamer is contacted by two RuvA subunits (via domain III) on 2 adjacent RuvB subunits; this complex drives branch migration. In the full resolvosome a probable DNA-RuvA(4)-RuvB(12)-RuvC(2) complex forms which resolves the HJ.

Its subcellular location is the cytoplasm. It catalyses the reaction ATP + H2O = ADP + phosphate + H(+). Its function is as follows. The RuvA-RuvB-RuvC complex processes Holliday junction (HJ) DNA during genetic recombination and DNA repair, while the RuvA-RuvB complex plays an important role in the rescue of blocked DNA replication forks via replication fork reversal (RFR). RuvA specifically binds to HJ cruciform DNA, conferring on it an open structure. The RuvB hexamer acts as an ATP-dependent pump, pulling dsDNA into and through the RuvAB complex. RuvB forms 2 homohexamers on either side of HJ DNA bound by 1 or 2 RuvA tetramers; 4 subunits per hexamer contact DNA at a time. Coordinated motions by a converter formed by DNA-disengaged RuvB subunits stimulates ATP hydrolysis and nucleotide exchange. Immobilization of the converter enables RuvB to convert the ATP-contained energy into a lever motion, pulling 2 nucleotides of DNA out of the RuvA tetramer per ATP hydrolyzed, thus driving DNA branch migration. The RuvB motors rotate together with the DNA substrate, which together with the progressing nucleotide cycle form the mechanistic basis for DNA recombination by continuous HJ branch migration. Branch migration allows RuvC to scan DNA until it finds its consensus sequence, where it cleaves and resolves cruciform DNA. The sequence is that of Holliday junction branch migration complex subunit RuvB from Leifsonia xyli subsp. xyli (strain CTCB07).